We begin with the raw amino-acid sequence, 250 residues long: Indole-3-glycerol phosphate synthase (250 aa).

The protein belongs to the TrpC family.

The catalysed reaction is 1-(2-carboxyphenylamino)-1-deoxy-D-ribulose 5-phosphate + H(+) = (1S,2R)-1-C-(indol-3-yl)glycerol 3-phosphate + CO2 + H2O. It functions in the pathway amino-acid biosynthesis; L-tryptophan biosynthesis; L-tryptophan from chorismate: step 4/5. The chain is Indole-3-glycerol phosphate synthase from Picrophilus torridus (strain ATCC 700027 / DSM 9790 / JCM 10055 / NBRC 100828 / KAW 2/3).